The sequence spans 469 residues: Adenosylhomocysteinase (469 aa).

Residues threonine 63, aspartate 139, and glutamate 164 each contribute to the substrate site. 165 to 167 (TTT) provides a ligand contact to NAD(+). The substrate site is built by lysine 194 and aspartate 198. NAD(+)-binding positions include asparagine 199, 228–233 (GYGDVG), glutamate 251, asparagine 300, 321–323 (IGH), and asparagine 375.

Belongs to the adenosylhomocysteinase family. The cofactor is NAD(+).

The protein resides in the cytoplasm. It catalyses the reaction S-adenosyl-L-homocysteine + H2O = L-homocysteine + adenosine. It participates in amino-acid biosynthesis; L-homocysteine biosynthesis; L-homocysteine from S-adenosyl-L-homocysteine: step 1/1. Functionally, may play a key role in the regulation of the intracellular concentration of adenosylhomocysteine. The polypeptide is Adenosylhomocysteinase (Pseudomonas syringae pv. syringae (strain B728a)).